Consider the following 154-residue polypeptide: Ribonuclease H (154 aa).

In terms of domain architecture, RNase H type-1 spans methionine 1–glycine 142. Aspartate 10, glutamate 48, aspartate 70, and aspartate 134 together coordinate Mg(2+).

It belongs to the RNase H family. Monomer. Mg(2+) serves as cofactor.

It is found in the cytoplasm. It carries out the reaction Endonucleolytic cleavage to 5'-phosphomonoester.. Endonuclease that specifically degrades the RNA of RNA-DNA hybrids. This is Ribonuclease H from Pseudoalteromonas translucida (strain TAC 125).